The primary structure comprises 475 residues: Aspartyl/glutamyl-tRNA(Asn/Gln) amidotransferase subunit B (475 aa).

The protein belongs to the GatB/GatE family. GatB subfamily. Heterotrimer of A, B and C subunits.

The catalysed reaction is L-glutamyl-tRNA(Gln) + L-glutamine + ATP + H2O = L-glutaminyl-tRNA(Gln) + L-glutamate + ADP + phosphate + H(+). The enzyme catalyses L-aspartyl-tRNA(Asn) + L-glutamine + ATP + H2O = L-asparaginyl-tRNA(Asn) + L-glutamate + ADP + phosphate + 2 H(+). Its function is as follows. Allows the formation of correctly charged Asn-tRNA(Asn) or Gln-tRNA(Gln) through the transamidation of misacylated Asp-tRNA(Asn) or Glu-tRNA(Gln) in organisms which lack either or both of asparaginyl-tRNA or glutaminyl-tRNA synthetases. The reaction takes place in the presence of glutamine and ATP through an activated phospho-Asp-tRNA(Asn) or phospho-Glu-tRNA(Gln). This chain is Aspartyl/glutamyl-tRNA(Asn/Gln) amidotransferase subunit B, found in Staphylococcus aureus (strain COL).